A 1687-amino-acid chain; its full sequence is Brefeldin A-inhibited guanine nucleotide-exchange protein 1 (1687 aa).

Residues 494–529 form a disordered region; sequence SLENEAPANNHSNSNEEDGTTIDHDFHPDLNPESSD. A compositionally biased stretch (basic and acidic residues) spans 514–523; sequence TIDHDFHPDL. In terms of domain architecture, SEC7 spans 532 to 719; that stretch reads TLEQRRAYKI…GALYDQVVIN (188 aa). E634 is a catalytic residue. The tract at residues 1229-1248 is disordered; sequence KGRSSSPSTPVTDDHSPSTQ. Polar residues predominate over residues 1232 to 1248; it reads SSSPSTPVTDDHSPSTQ.

Homodimer.

It localises to the cytoplasm. The protein localises to the cytosol. Its subcellular location is the membrane. Inhibited by brefeldin A. In terms of biological role, activates the ARF proteins by exchanging bound GDP for free GTP. Plays a role in vesicular protein sorting. This is Brefeldin A-inhibited guanine nucleotide-exchange protein 1 (BIG1) from Arabidopsis thaliana (Mouse-ear cress).